The following is a 133-amino-acid chain: Small ribosomal subunit protein uS9 (133 aa).

Basic and acidic residues predominate over residues Gly-95–Lys-113. The interval Gly-95–Arg-133 is disordered. A compositionally biased stretch (basic residues) spans Lys-114–Arg-133.

The protein belongs to the universal ribosomal protein uS9 family.

This Chlamydia felis (strain Fe/C-56) (Chlamydophila felis) protein is Small ribosomal subunit protein uS9.